The chain runs to 403 residues: Protein-glutamate methylesterase/protein-glutamine glutaminase (403 aa).

The region spanning 8–126 (AVLIVDDSAL…SAHLRTVSRK (119 aa)) is the Response regulatory domain. Aspartate 59 is modified (4-aspartylphosphate). In terms of domain architecture, CheB-type methylesterase spans 204-393 (PLRESGALQI…VSLDDMAATI (190 aa)). Catalysis depends on residues serine 219, histidine 246, and aspartate 342.

It belongs to the CheB family. In terms of processing, phosphorylated by CheA. Phosphorylation of the N-terminal regulatory domain activates the methylesterase activity.

Its subcellular location is the cytoplasm. The enzyme catalyses [protein]-L-glutamate 5-O-methyl ester + H2O = L-glutamyl-[protein] + methanol + H(+). The catalysed reaction is L-glutaminyl-[protein] + H2O = L-glutamyl-[protein] + NH4(+). In terms of biological role, involved in chemotaxis. Part of a chemotaxis signal transduction system that modulates chemotaxis in response to various stimuli. Catalyzes the demethylation of specific methylglutamate residues introduced into the chemoreceptors (methyl-accepting chemotaxis proteins or MCP) by CheR. Also mediates the irreversible deamidation of specific glutamine residues to glutamic acid. The protein is Protein-glutamate methylesterase/protein-glutamine glutaminase of Treponema pallidum (strain Nichols).